A 449-amino-acid polypeptide reads, in one-letter code: tRNA (guanine(37)-N(1))-methyltransferase (449 aa).

S-adenosyl-L-methionine-binding positions include His-216, 254 to 255 (DL), 282 to 283 (DG), and Asn-345.

The protein belongs to the class I-like SAM-binding methyltransferase superfamily. TRM5/TYW2 family. In terms of assembly, monomer.

The protein resides in the mitochondrion matrix. It is found in the nucleus. The protein localises to the cytoplasm. It catalyses the reaction guanosine(37) in tRNA + S-adenosyl-L-methionine = N(1)-methylguanosine(37) in tRNA + S-adenosyl-L-homocysteine + H(+). Specifically methylates the N1 position of guanosine-37 in various cytoplasmic and mitochondrial tRNAs. Methylation is not dependent on the nature of the nucleoside 5' of the target nucleoside. This is the first step in the biosynthesis of wybutosine (yW), a modified base adjacent to the anticodon of tRNAs and required for accurate decoding. This Candida albicans (strain WO-1) (Yeast) protein is tRNA (guanine(37)-N(1))-methyltransferase.